We begin with the raw amino-acid sequence, 560 residues long: 2-succinylbenzoate--CoA ligase, chloroplastic/peroxisomal (560 aa).

A chloroplast-targeting transit peptide spans 1–15 (MANHSRPHICQCLTR). Transmembrane regions (helical) follow at residues 69-89 (LFLE…PLNY), 189-209 (GVTI…AIAG), and 225-245 (IGGL…VLLP). The short motif at 558–560 (SSL) is the Microbody targeting signal element.

The protein belongs to the ATP-dependent AMP-binding enzyme family. MenE subfamily. In terms of tissue distribution, high expression in young leaves and flowers. Not expressed in roots.

It localises to the plastid. The protein resides in the chloroplast membrane. It is found in the peroxisome membrane. The catalysed reaction is 2-succinylbenzoate + ATP + CoA = 2-succinylbenzoyl-CoA + AMP + diphosphate. Its function is as follows. Involved in the biosynthesis of phylloquinone (vitamin K1). Converts 2-succinylbenzoate (OSB) to 2-succinylbenzoyl-CoA (OSB-CoA). This is 2-succinylbenzoate--CoA ligase, chloroplastic/peroxisomal (AAE14) from Arabidopsis thaliana (Mouse-ear cress).